A 92-amino-acid polypeptide reads, in one-letter code: Cell division topological specificity factor (92 aa).

The protein belongs to the MinE family.

Prevents the cell division inhibition by proteins MinC and MinD at internal division sites while permitting inhibition at polar sites. This ensures cell division at the proper site by restricting the formation of a division septum at the midpoint of the long axis of the cell. The protein is Cell division topological specificity factor of Desulforamulus reducens (strain ATCC BAA-1160 / DSM 100696 / MI-1) (Desulfotomaculum reducens).